The sequence spans 396 residues: 3-amino-4-hydroxybenzoate 2-monooxygenase PtnB3 (396 aa).

FAD is bound by residues Ala19, 38–39, and Arg112; that span reads EQ. Tyr217 (proton acceptor) is an active-site residue. Asp295 contributes to the FAD binding site.

The protein belongs to the 6-hydroxynicotinate 3-monooxygenase family. It depends on FAD as a cofactor.

It catalyses the reaction 3-amino-4-hydroxybenzoate + NADPH + O2 + H(+) = 3-amino-2,4-dihydroxybenzoate + NADP(+) + H2O. Its pathway is antibiotic biosynthesis. Functionally, part of a gene cluster involved in the biosynthesis of thioplatencin (ThioPTN) and platencin (PTN), potent and selective inhibitors of bacterial and mammalian fatty acid synthases. Catalyzes the hydroxylation of 3-amino-4-hydroxybenzoate (3,4-AHBA) to 3-amino-2,4-dihydroxybenzoate (3,2,4-ADHBA). This Streptomyces platensis protein is 3-amino-4-hydroxybenzoate 2-monooxygenase PtnB3.